The following is a 302-amino-acid chain: Enoyl-CoA delta isomerase 1, mitochondrial (302 aa).

A mitochondrion-targeting transit peptide spans 1–41; the sequence is MALVASVRVPARVLLRAGARLPGAALGRTERAAGGGDGARR. Residue lysine 61 is modified to N6-acetyllysine; alternate. Position 61 is an N6-succinyllysine; alternate (lysine 61). An N6-succinyllysine modification is found at lysine 84. An N6-acetyllysine modification is found at lysine 89. Substrate-binding positions include 106-110, glycine 153, and asparagine 177; that span reads AGLDL. Residue lysine 283 is modified to N6-acetyllysine; alternate. Position 283 is an N6-succinyllysine; alternate (lysine 283). Position 288 is an N6-succinyllysine (lysine 288).

The protein belongs to the enoyl-CoA hydratase/isomerase family. In terms of assembly, homotrimer. In terms of tissue distribution, expressed in liver (at protein level).

Its subcellular location is the mitochondrion matrix. The enzyme catalyses a (3Z)-enoyl-CoA = a 4-saturated (2E)-enoyl-CoA. It carries out the reaction a (3E)-enoyl-CoA = a 4-saturated (2E)-enoyl-CoA. The catalysed reaction is (3Z)-octenoyl-CoA = (2E)-octenoyl-CoA. It catalyses the reaction (2E)-tetradecenoyl-CoA = (3Z)-tetradecenoyl-CoA. The enzyme catalyses (3Z)-dodecenoyl-CoA = (2E)-dodecenoyl-CoA. It carries out the reaction (3Z)-hexenoyl-CoA = (2E)-hexenoyl-CoA. The catalysed reaction is (3Z)-decenoyl-CoA = (2E)-decenoyl-CoA. It participates in lipid metabolism; fatty acid beta-oxidation. Functionally, key enzyme of fatty acid beta-oxidation. Able to isomerize both 3-cis (3Z) and 3-trans (3E) double bonds into the 2-trans (2E) form in a range of enoyl-CoA species, with a preference for (3Z)-enoyl-CoAs over (3E)-enoyl-CoAs. The catalytic efficiency of this enzyme is not affected by the fatty acyl chain length. The protein is Enoyl-CoA delta isomerase 1, mitochondrial (ECI1) of Homo sapiens (Human).